Consider the following 195-residue polypeptide: Ephrin-A2 (195 aa).

A signal peptide spans 1-16 (MELSLVVFTVVCWVSV). Residues 24 to 157 (SDRHAVYWNS…KLKVYVKPTS (134 aa)) enclose the Ephrin RBD domain. N-linked (GlcNAc...) asparagine glycosylation is present at Asn32. 2 disulfides stabilise this stretch: Cys57/Cys97 and Cys85/Cys146. Cys174 is lipidated: GPI-anchor amidated cysteine. A propeptide spans 175-195 (GADGPCLAVLMLLLVFLLAGV) (removed in mature form).

The protein belongs to the ephrin family. As to quaternary structure, binds to the receptor tyrosine kinases epha2, epha3, epha4 and epha5. Interacts with epha8; activates epha8. Widespread expression in the embryo.

The protein resides in the cell membrane. Functionally, cell surface GPI-bound ligand for Eph receptors, a family of receptor tyrosine kinases which are crucial for migration, repulsion and adhesion during neuronal, vascular and epithelial development. Binds promiscuously Eph receptors residing on adjacent cells, leading to contact-dependent bidirectional signaling into neighboring cells. The signaling pathway downstream of the receptor is referred to as forward signaling while the signaling pathway downstream of the ephrin ligand is referred to as reverse signaling. With the epha2 receptor may play a role in bone remodeling through regulation of osteoclastogenesis and osteoblastogenesis. The polypeptide is Ephrin-A2 (efna2) (Danio rerio (Zebrafish)).